The chain runs to 81 residues: ATP synthase subunit C, plastid (81 aa).

2 consecutive transmembrane segments (helical) span residues 3 to 23 (PLIPAASVIAAGLAVGLASIG) and 61 to 81 (EALTIYGLVVALALSFANPFI).

It belongs to the ATPase C chain family. As to quaternary structure, F-type ATPases have 2 components, F(1) - the catalytic core - and F(0) - the membrane proton channel. F(1) has five subunits: alpha(3), beta(3), gamma(1), delta(1), epsilon(1). F(0) has four main subunits: a(1), b(1), b'(1) and c(10-14). The alpha and beta chains form an alternating ring which encloses part of the gamma chain. F(1) is attached to F(0) by a central stalk formed by the gamma and epsilon chains, while a peripheral stalk is formed by the delta, b and b' chains.

It localises to the plastid membrane. In terms of biological role, f(1)F(0) ATP synthase produces ATP from ADP in the presence of a proton or sodium gradient. F-type ATPases consist of two structural domains, F(1) containing the extramembraneous catalytic core and F(0) containing the membrane proton channel, linked together by a central stalk and a peripheral stalk. During catalysis, ATP synthesis in the catalytic domain of F(1) is coupled via a rotary mechanism of the central stalk subunits to proton translocation. Its function is as follows. Key component of the F(0) channel; it plays a direct role in translocation across the membrane. A homomeric c-ring of between 10-14 subunits forms the central stalk rotor element with the F(1) delta and epsilon subunits. This is ATP synthase subunit C, plastid from Aneura mirabilis (Parasitic liverwort).